The chain runs to 556 residues: TNF receptor-associated factor 6-A (556 aa).

The RING-type; degenerate zinc finger occupies Cys-72–Asn-111. 2 TRAF-type zinc fingers span residues Arg-148–Ser-204 and Gly-205–Ala-261. The 150-residue stretch at Asn-384 to Val-533 folds into the MATH domain.

Belongs to the TNF receptor-associated factor family. A subfamily. As to quaternary structure, homotrimer. Homooligomer. Interacts with tifa. As to expression, highly expressed in ovary and moderately expressed in kidney, spleen, stomach, colon and testis.

The protein localises to the cytoplasm. Its subcellular location is the cell cortex. It is found in the nucleus. The protein resides in the lipid droplet. The enzyme catalyses S-ubiquitinyl-[E2 ubiquitin-conjugating enzyme]-L-cysteine + [acceptor protein]-L-lysine = [E2 ubiquitin-conjugating enzyme]-L-cysteine + N(6)-ubiquitinyl-[acceptor protein]-L-lysine.. The protein operates within protein modification; protein ubiquitination. Its function is as follows. E3 ubiquitin ligase that, together with UBE2N and UBE2V1, mediates the synthesis of 'Lys-63'-linked-polyubiquitin chains conjugated to proteins, such as IKBKG, IRAK1, AKT1 and AKT2. Also mediates ubiquitination of free/unanchored polyubiquitin chain that leads to MAP3K7 activation. The sequence is that of TNF receptor-associated factor 6-A (traf6-a) from Xenopus laevis (African clawed frog).